The primary structure comprises 175 residues: Small ribosomal subunit protein uS5 (175 aa).

Residues 19–82 enclose the S5 DRBM domain; that stretch reads WVDRLVSVNR…DDAKKNVIRV (64 aa).

Belongs to the universal ribosomal protein uS5 family. As to quaternary structure, part of the 30S ribosomal subunit. Contacts proteins S4 and S8.

With S4 and S12 plays an important role in translational accuracy. In terms of biological role, located at the back of the 30S subunit body where it stabilizes the conformation of the head with respect to the body. In Salinibacter ruber (strain DSM 13855 / M31), this protein is Small ribosomal subunit protein uS5.